A 295-amino-acid polypeptide reads, in one-letter code: Nitrogenase iron protein 1 (295 aa).

An ATP-binding site is contributed by 12 to 19 (GKGGIGKS). C100 contacts [4Fe-4S] cluster. R103 bears the ADP-ribosylarginine; by dinitrogenase reductase ADP-ribosyltransferase mark. Residue C134 coordinates [4Fe-4S] cluster.

This sequence belongs to the NifH/BchL/ChlL family. As to quaternary structure, homodimer. [4Fe-4S] cluster serves as cofactor. Post-translationally, the reversible ADP-ribosylation of Arg-103 inactivates the nitrogenase reductase and regulates nitrogenase activity.

It catalyses the reaction N2 + 8 reduced [2Fe-2S]-[ferredoxin] + 16 ATP + 16 H2O = H2 + 8 oxidized [2Fe-2S]-[ferredoxin] + 2 NH4(+) + 16 ADP + 16 phosphate + 6 H(+). The key enzymatic reactions in nitrogen fixation are catalyzed by the nitrogenase complex, which has 2 components: the iron protein and the molybdenum-iron protein. The protein is Nitrogenase iron protein 1 (nifH1) of Mastigocladus laminosus (Fischerella sp.).